The primary structure comprises 530 residues: 26S proteasome non-ATPase regulatory subunit 3 (530 aa).

Residues 1–16 are compositionally biased toward basic and acidic residues; that stretch reads MKQEGSARRRGADKAK. The segment at 1–65 is disordered; it reads MKQEGSARRR…TEHSQRELDT (65 aa). Over residues 17–30 the composition is skewed to pro residues; the sequence is PPPGGEQEPPPPAP. Residue Lys36 forms a Glycyl lysine isopeptide (Lys-Gly) (interchain with G-Cter in SUMO1); alternate linkage. Lys36 is covalently cross-linked (Glycyl lysine isopeptide (Lys-Gly) (interchain with G-Cter in SUMO2); alternate). In terms of domain architecture, PCI spans 282-461; sequence ARYLYYTGRI…GYVQSKEMID (180 aa). Phosphoserine is present on residues Ser414 and Ser426. A disordered region spans residues 496 to 530; that stretch reads SYNKDLESAEERREREQQDLEFAKEMAEDDDDSFP. The segment covering 497–521 has biased composition (basic and acidic residues); the sequence is YNKDLESAEERREREQQDLEFAKEM.

The protein belongs to the proteasome subunit S3 family. Component of the 19S proteasome regulatory particle complex. The 26S proteasome consists of a 20S core particle (CP) and two 19S regulatory subunits (RP). The regulatory particle is made of a lid composed of 9 subunits including PSMD3, a base containing 6 ATPases and few additional components. Interacts with UBQLN1 (via ubiquitin-like domain). Interacts with ERCC6.

Component of the 26S proteasome, a multiprotein complex involved in the ATP-dependent degradation of ubiquitinated proteins. This complex plays a key role in the maintenance of protein homeostasis by removing misfolded or damaged proteins, which could impair cellular functions, and by removing proteins whose functions are no longer required. Therefore, the proteasome participates in numerous cellular processes, including cell cycle progression, apoptosis, or DNA damage repair. The chain is 26S proteasome non-ATPase regulatory subunit 3 (Psmd3) from Mus musculus (Mouse).